The sequence spans 193 residues: Recombination protein RecR (193 aa).

The segment at 61–76 (CSSCNALSESEVCEIC) adopts a C4-type zinc-finger fold. The region spanning 84 to 170 (SQLCMVLHPR…TFTKIAQGVP (87 aa)) is the Toprim domain.

Belongs to the RecR family.

May play a role in DNA repair. It seems to be involved in an RecBC-independent recombinational process of DNA repair. It may act with RecF and RecO. This is Recombination protein RecR from Helicobacter pylori (strain P12).